Reading from the N-terminus, the 384-residue chain is MTTKLIPAQQYHDIFVAGKPLIDLRAPIEFDRGAFPSSVNLPLMVDKEREKVGTCYKEQGQQAAIALGHSLVHGVVKQQRIDAWLNFLSAHPQAYLYCFRGGLRSQLTQQWLQEAGVTVPYVQGGYKGMRQYLIGVIEAAPSLQPLLSLSGMTGSGKTDFLKRRKEAIDLEGIANHRGSSFGKNIDPQPTQINFENRLAIALLHHQLGNHACLLLEDESFLIGRSALPQSFYSAMQTADIVVLEEDDDIRLTRLLDEYVHKMHRGFIERLGLEAGFEAFSHYLLQSLGSIRKRLGGKQYQELQDIMQQALSQQLNQNQTSQHLAWISLLLHKYYDPMYEYQLQKKAGNILFRGSHQATHEWLDNYQRDNYHRNNDPLNSQHSKG.

A Rhodanese domain is found at 15-138; the sequence is FVAGKPLIDL…MRQYLIGVIE (124 aa). C98 acts as the S-selanylcysteine intermediate in catalysis.

It belongs to the SelU family. As to quaternary structure, monomer.

The enzyme catalyses 5-methylaminomethyl-2-thiouridine(34) in tRNA + selenophosphate + (2E)-geranyl diphosphate + H2O + H(+) = 5-methylaminomethyl-2-selenouridine(34) in tRNA + (2E)-thiogeraniol + phosphate + diphosphate. It carries out the reaction 5-methylaminomethyl-2-thiouridine(34) in tRNA + (2E)-geranyl diphosphate = 5-methylaminomethyl-S-(2E)-geranyl-thiouridine(34) in tRNA + diphosphate. It catalyses the reaction 5-methylaminomethyl-S-(2E)-geranyl-thiouridine(34) in tRNA + selenophosphate + H(+) = 5-methylaminomethyl-2-(Se-phospho)selenouridine(34) in tRNA + (2E)-thiogeraniol. The catalysed reaction is 5-methylaminomethyl-2-(Se-phospho)selenouridine(34) in tRNA + H2O = 5-methylaminomethyl-2-selenouridine(34) in tRNA + phosphate. In terms of biological role, involved in the post-transcriptional modification of the uridine at the wobble position (U34) of tRNA(Lys), tRNA(Glu) and tRNA(Gln). Catalyzes the conversion of 2-thiouridine (S2U-RNA) to 2-selenouridine (Se2U-RNA). Acts in a two-step process involving geranylation of 2-thiouridine (S2U) to S-geranyl-2-thiouridine (geS2U) and subsequent selenation of the latter derivative to 2-selenouridine (Se2U) in the tRNA chain. This is tRNA 2-selenouridine synthase from Shewanella sp. (strain MR-4).